We begin with the raw amino-acid sequence, 332 residues long: tRNA dimethylallyltransferase (332 aa).

14–21 (GPTASGKT) is an ATP binding site. 16–21 (TASGKT) lines the substrate pocket. The segment at 39–42 (DSMQ) is interaction with substrate tRNA. The segment at 313–332 (KRSSKHDCKPQHPRSSTREL) is disordered. The span at 317–332 (KHDCKPQHPRSSTREL) shows a compositional bias: basic and acidic residues.

The protein belongs to the IPP transferase family. In terms of assembly, monomer. It depends on Mg(2+) as a cofactor.

It carries out the reaction adenosine(37) in tRNA + dimethylallyl diphosphate = N(6)-dimethylallyladenosine(37) in tRNA + diphosphate. In terms of biological role, catalyzes the transfer of a dimethylallyl group onto the adenine at position 37 in tRNAs that read codons beginning with uridine, leading to the formation of N6-(dimethylallyl)adenosine (i(6)A). In Staphylococcus haemolyticus (strain JCSC1435), this protein is tRNA dimethylallyltransferase.